A 444-amino-acid polypeptide reads, in one-letter code: Aflatoxin biosynthesis regulatory protein (444 aa).

The segment at 1–26 (MVDHISPRASPGPIRSSQTRRARKLR) is disordered. Positions 29 to 56 (CTSCASSKVRCTKEKPACARCIERGLAC) form a DNA-binding region, zn(2)-C6 fungal-type. A disordered region spans residues 64-167 (MGRNPRAPSP…QGLGGDLAGQ (104 aa)). Basic residues predominate over residues 106–116 (TQAHTHAHSHP). Residues 120-130 (PQSHPQSNQPP) are compositionally biased toward low complexity. Residues 136 to 149 (PNGSSSVSAIFSHQ) show a composition bias toward polar residues.

Its subcellular location is the nucleus. Its pathway is mycotoxin biosynthesis; aflatoxin biosynthesis. Its function is as follows. Involved in the regulation of aflatoxin biosynthesis. May have a role in nitrate assimilation and sclerotial morphogenesis. The chain is Aflatoxin biosynthesis regulatory protein (aflR) from Aspergillus parasiticus.